The sequence spans 75 residues: DNA-directed RNA polymerase subunit epsilon (75 aa).

Belongs to the RNA polymerase subunit epsilon family. In terms of assembly, RNAP is composed of a core of 2 alpha, a beta and a beta' subunit. The core is associated with a delta subunit, and at least one of epsilon or omega. When a sigma factor is associated with the core the holoenzyme is formed, which can initiate transcription.

It catalyses the reaction RNA(n) + a ribonucleoside 5'-triphosphate = RNA(n+1) + diphosphate. In terms of biological role, a non-essential component of RNA polymerase (RNAP). The sequence is that of DNA-directed RNA polymerase subunit epsilon from Lactobacillus johnsonii (strain CNCM I-12250 / La1 / NCC 533).